A 574-amino-acid chain; its full sequence is Sulfate adenylyltransferase (574 aa).

Residues 1-170 (MANAPHGGVL…VQAVSKPAYY (170 aa)) form an N-terminal region. The catalytic stretch occupies residues 171-395 (DYVALRYTPA…LRESYPPKAK (225 aa)). Gln-198 is a binding site for sulfate. Residues 198–201 (QTRN) and 292–295 (GRDH) contribute to the ATP site. Catalysis depends on residues Thr-199, Arg-200, and Asn-201. Sulfate is bound at residue Arg-200. Sulfate is bound at residue Ala-296. Met-334 serves as a coordination point for ATP. The tract at residues 396–574 (QGFTLFLTGL…ILLLEAQSLI (179 aa)) is allosteric regulation domain; adenylyl-sulfate kinase-like. 3'-phosphoadenylyl sulfate is bound by residues 435-438 (ETVR), Arg-452, 478-479 (IA), and Lys-519.

This sequence in the N-terminal section; belongs to the sulfate adenylyltransferase family. In the C-terminal section; belongs to the APS kinase family. As to quaternary structure, homohexamer. Dimer of trimers.

The protein resides in the cytoplasm. The catalysed reaction is sulfate + ATP + H(+) = adenosine 5'-phosphosulfate + diphosphate. Its pathway is sulfur metabolism; hydrogen sulfide biosynthesis; sulfite from sulfate: step 1/3. Its activity is regulated as follows. Allosterically inhibited by 3'-phosphoadenosine 5'-phosphosulfate (PAPS). In terms of biological role, catalyzes the first intracellular reaction of sulfate assimilation, forming adenosine-5'-phosphosulfate (APS) from inorganic sulfate and ATP. Plays an important role in sulfate activation as a component of the biosynthesis pathway of sulfur-containing amino acids. In Mycosarcoma maydis (Corn smut fungus), this protein is Sulfate adenylyltransferase.